The chain runs to 281 residues: MTDRPLNVDSGLWIRRFHPAPNSAVRLVCLPHAGGSASYFFRFSEELHPSVEALSVQYPGRQDRRAEPCLESVEELAEHVVAATEPWWQEGRLAFFGHSLGASVAFETARILEQRHGVRPEGLYVSGRRAPSLAPDRLVHQLDDRAFLAEIRRLSGTDERFLQDDELLRLVLPALRSDYKAAETYLHRPSAKLTCPVMALAGDRDPKAPLNEVAEWRRHTSGPFCLRAYSGGHFYLNDQWHEICNDISDHLLVTRGAPDARVVQPPTSLIEGAAKRWQNPR.

A thioesterase region spans residues 26 to 249; the sequence is RLVCLPHAGG…WHEICNDISD (224 aa). The Nucleophile; for thioesterase activity role is filled by Ser99. Residue His233 is the Proton acceptor; for thioesterase activity of the active site.

The protein belongs to the thioesterase family.

The protein operates within antibiotic biosynthesis. In terms of biological role, involved in the biosynthesis of 12- and 14-membered ring macrolactone antibiotics such as methymycin, neomethymycin, narbomycin and pikromycin. Responsible for removing mis-formed acyl moieties (aberrant decarboxylation) that are bound to the PKS and could block it. Catalyzes the cleavage of methylmalonyl-[acp]. It exhibits some acyl-group specificity, and catalyzes the cleavage of propionyl and butyryl derivatives faster than acetyl malonyl or methylmalonyl derivatives. In Streptomyces venezuelae, this protein is Thioesterase PikA5.